Reading from the N-terminus, the 425-residue chain is tRNA(Ile)-lysidine synthase (425 aa).

27 to 32 lines the ATP pocket; the sequence is SGGLDS.

Belongs to the tRNA(Ile)-lysidine synthase family.

The protein resides in the cytoplasm. The catalysed reaction is cytidine(34) in tRNA(Ile2) + L-lysine + ATP = lysidine(34) in tRNA(Ile2) + AMP + diphosphate + H(+). Functionally, ligates lysine onto the cytidine present at position 34 of the AUA codon-specific tRNA(Ile) that contains the anticodon CAU, in an ATP-dependent manner. Cytidine is converted to lysidine, thus changing the amino acid specificity of the tRNA from methionine to isoleucine. The sequence is that of tRNA(Ile)-lysidine synthase from Streptococcus gordonii (strain Challis / ATCC 35105 / BCRC 15272 / CH1 / DL1 / V288).